The primary structure comprises 399 residues: uncharacterized protein (399 aa).

The next 10 helical transmembrane spans lie at 6-26 (HLTFTINLLVSLFFLTILIIP), 27-47 (KGYNYAPIILSAIGLIYFIPL), 60-80 (LIFSFLFYFFTFLLSIIINKD), 111-131 (ILYAIPSSALITGCVALFQKF), 147-167 (MGNIAISLATFSIVITLHFFI), 173-193 (STLFGFVAIILAIMTSALSGA), 195-215 (GGWIGLPVVVGIILFLYKEFI), 220-240 (IITLIAIITIGLTALITSPKF), 328-348 (GLVGFIALILIILTPIFYFIK), and 362-382 (ILGIIHIVSHIFYFTSQSFLA).

Its subcellular location is the cell membrane. This is an uncharacterized protein from Haemophilus influenzae (strain ATCC 51907 / DSM 11121 / KW20 / Rd).